The chain runs to 237 residues: UPF0688 protein C1orf174 homolog (237 aa).

Residues 1–187 (MRSRKLAGGV…LLDDDSNQPM (187 aa)) are disordered. A compositionally biased stretch (low complexity) spans 11 to 28 (RSSARLRARSCSAASASA). Residues 29 to 47 (QDTHVTTSAQTACQTPSSH) show a composition bias toward polar residues. Over residues 48-76 (KATDRRTSKKFKYDKGHIVKSELQKHRSD) the composition is skewed to basic and acidic residues. Residue Ser-183 is modified to Phosphoserine.

The protein belongs to the UPF0688 family.

It is found in the nucleus. In Bos taurus (Bovine), this protein is UPF0688 protein C1orf174 homolog.